A 261-amino-acid chain; its full sequence is 8-demethyl-8-(2,3-dimethoxy-alpha-L-rhamnosyl)-tetracenomycin-C 4'-O-methyltransferase (261 aa).

S-adenosyl-L-methionine-binding positions include 53–54, 81–85, 111–115, Phe167, 185–186, and Ser191; these read TM, ETGVW, DSFEG, and DG. A Mg(2+)-binding site is contributed by Asp185. Mg(2+) contacts are provided by Asp212 and Asp213.

This sequence belongs to the methyltransferase TylF/MycF family. The cofactor is Mg(2+).

It catalyses the reaction 8-demethyl-8-(2,3-di-O-methyl-alpha-L-rhamnosyl)-tetracenomycin C + S-adenosyl-L-methionine = 8-demethyl-8-(2,3,4-tri-O-methyl-alpha-L-rhamnosyl)-tetracenomycin C + S-adenosyl-L-homocysteine + H(+). Its pathway is antibiotic biosynthesis. Its function is as follows. O-methyltransferase involved in the biosynthesis of the permethylated L-rhamnose moiety of elloramycin, an antitumor polyketide. Mediates the methylation of the hydroxy groups at the 4'-position after the sugar moiety has been attached to the aglycon. In Streptomyces olivaceus, this protein is 8-demethyl-8-(2,3-dimethoxy-alpha-L-rhamnosyl)-tetracenomycin-C 4'-O-methyltransferase.